Here is a 657-residue protein sequence, read N- to C-terminus: Threonine--tRNA ligase (657 aa).

A TGS domain is found at 1–62 (MALDITFPDG…AHSGQLQIMT (62 aa)). Positions 240 to 538 (DHRVIGRDLD…LTEIYKGAFP (299 aa)) are catalytic. Zn(2+)-binding residues include cysteine 334, histidine 385, and histidine 515.

This sequence belongs to the class-II aminoacyl-tRNA synthetase family. As to quaternary structure, homodimer. Zn(2+) serves as cofactor.

The protein resides in the cytoplasm. The catalysed reaction is tRNA(Thr) + L-threonine + ATP = L-threonyl-tRNA(Thr) + AMP + diphosphate + H(+). In terms of biological role, catalyzes the attachment of threonine to tRNA(Thr) in a two-step reaction: L-threonine is first activated by ATP to form Thr-AMP and then transferred to the acceptor end of tRNA(Thr). Also edits incorrectly charged L-seryl-tRNA(Thr). The polypeptide is Threonine--tRNA ligase (Lacticaseibacillus paracasei (strain ATCC 334 / BCRC 17002 / CCUG 31169 / CIP 107868 / KCTC 3260 / NRRL B-441) (Lactobacillus paracasei)).